The chain runs to 375 residues: Killer cell immunoglobulin-like receptor 2DL5B (375 aa).

Residues 1–21 form the signal peptide; sequence MSLMVVSMACVGFFLLQGAWT. Residues 22–238 lie on the Extracellular side of the membrane; the sequence is HEGGQDKPLL…PSSKTGIRRH (217 aa). 2 Ig-like C2-type domains span residues 42-102 and 137-200; these read GGHV…HPRS and GENV…LHDS. Cystine bridges form between Cys49–Cys95 and Cys144–Cys193. The segment at 213 to 233 is disordered; sequence VSVTGNSSSSSSSPTEPSSKT. A glycan (N-linked (GlcNAc...) asparagine) is linked at Asn218. Residues 219 to 231 show a composition bias toward low complexity; that stretch reads SSSSSSSPTEPSS. The chain crosses the membrane as a helical span at residues 239 to 259; sequence LHILIGTSVAIILFIILFFFL. Over 260–375 the chain is Cytoplasmic; it reads LHCCCSNKKN…ASSHVPAAGI (116 aa). The tract at residues 334 to 375 is disordered; sequence AKPRSLSPAHKHHSQALRGSSRETTALSQNRVASSHVPAAGI. Polar residues predominate over residues 355–366; sequence RETTALSQNRVA.

This sequence belongs to the immunoglobulin superfamily.

The protein resides in the cell membrane. Functionally, receptor on natural killer (NK) cells for HLA-C alleles. Inhibits the activity of NK cells thus preventing cell lysis. The protein is Killer cell immunoglobulin-like receptor 2DL5B (KIR2DL5B) of Homo sapiens (Human).